The sequence spans 98 residues: Dehydrin HIRD11 (98 aa).

Residues 1 to 98 (MAGLINKIGD…HSSSSDSDSD (98 aa)) form a disordered region. The segment covering 19-72 (KEGEHKKEEEHKKHVDEHKSGEHKEGIVDKIKDKIHGGEGKSHDGEGKSHDGEK) has biased composition (basic and acidic residues). A compositionally biased stretch (basic residues) spans 73–82 (KKKKDKKEKK).

This sequence belongs to the KS-type dehydrin family. In terms of assembly, interacts with PXL1. In terms of processing, phosphorylated in vivo. Phosphorylated in vitro by PXL1. Highly expressed in the cambial zone of the stem vasculature (at protein level). Expressed in roots, rosettes leaves, stems, cauline leaves, flowers and siliques.

Its subcellular location is the cytoplasm. The protein localises to the nucleus. Functionally, intrinsically disordered and metal-binding protein. Binds to the divalent cations cobalt, nickel, copper and zinc, but not to magnesium, calcium, manganese or cadmium. Binding to metal ions decreases disordered state, decreases susceptibility to trypsin and promotes self-association. Can reduce the formation of reactive oxygen species (ROS) in a copper-ascorbate in vitro system. This chain is Dehydrin HIRD11, found in Arabidopsis thaliana (Mouse-ear cress).